Reading from the N-terminus, the 159-residue chain is IQ domain-containing protein J (159 aa).

One can recognise an IQ domain in the interval 47–67 (ESKVKIIQRAWREYLQRQEPL). Residues 63–88 (RQEPLGKRSPSPPSVSSEKLSSSVSM) are disordered. Positions 76–87 (SVSSEKLSSSVS) are enriched in low complexity.

The protein is IQ domain-containing protein J of Homo sapiens (Human).